A 414-amino-acid polypeptide reads, in one-letter code: Glutamyl-tRNA reductase (414 aa).

Substrate is bound by residues 47 to 50, serine 106, 111 to 113, and glutamine 117; these read TCNR and EAQ. The active-site Nucleophile is the cysteine 48. 185–190 is an NADP(+) binding site; it reads GAGRTG.

The protein belongs to the glutamyl-tRNA reductase family. In terms of assembly, homodimer.

It catalyses the reaction (S)-4-amino-5-oxopentanoate + tRNA(Glu) + NADP(+) = L-glutamyl-tRNA(Glu) + NADPH + H(+). Its pathway is porphyrin-containing compound metabolism; protoporphyrin-IX biosynthesis; 5-aminolevulinate from L-glutamyl-tRNA(Glu): step 1/2. Catalyzes the NADPH-dependent reduction of glutamyl-tRNA(Glu) to glutamate 1-semialdehyde (GSA). This Herpetosiphon aurantiacus (strain ATCC 23779 / DSM 785 / 114-95) protein is Glutamyl-tRNA reductase.